We begin with the raw amino-acid sequence, 504 residues long: Anaerobic nitric oxide reductase transcription regulator NorR (504 aa).

Asp-57 carries the 4-aspartylphosphate modification. The 230-residue stretch at 187-416 (MIGLSPGMTQ…LEHAIHRAVV (230 aa)) folds into the Sigma-54 factor interaction domain. Residues 215-222 (GETGTGKE) and 278-287 (ADNGTLFLDE) each bind ATP. Positions 479–498 (WAACARMLETDVANLHRLAK) form a DNA-binding region, H-T-H motif.

It functions in the pathway nitrogen metabolism; nitric oxide reduction. In terms of biological role, required for the expression of anaerobic nitric oxide (NO) reductase, acts as a transcriptional activator for at least the norVW operon. Activation also requires sigma-54. The sequence is that of Anaerobic nitric oxide reductase transcription regulator NorR from Escherichia coli O139:H28 (strain E24377A / ETEC).